Reading from the N-terminus, the 111-residue chain is Cytochrome c 2.1 (111 aa).

The residue at position 2 (Ser-2) is an N-acetylserine. The heme c site is built by Cys-20, Cys-23, His-24, and Met-85.

The protein belongs to the cytochrome c family. In terms of processing, binds 1 heme c group covalently per subunit.

The protein resides in the mitochondrion intermembrane space. Electron carrier protein. The oxidized form of the cytochrome c heme group can accept an electron from the heme group of the cytochrome c1 subunit of cytochrome reductase. Cytochrome c then transfers this electron to the cytochrome oxidase complex, the final protein carrier in the mitochondrial electron-transport chain. This chain is Cytochrome c 2.1 (cyc-2.1), found in Caenorhabditis elegans.